The primary structure comprises 496 residues: MRALRRLIQGRILLLTICAAGIGGTFQFGYNLSIINAPTLHIQEFTNETWQARTGEPLPDHLVLLMWSLIVSLYPLGGLFGALLAGPLAITLGRKKSLLVNNIFVVSAAILFGFSRKAGSFEMIMLGRLLVGVNAGVSMNIQPMYLGESAPKELRGAVAMSSAIFTALGIVMGQVVGLRELLGGPQAWPLLLASCLVPGALQLASLPLLPESPRYLLIDCGDTEACLAALRRLRGSGDLAGELEELEEERAACQGCRARRPWELFQHRALRRQVTSLVVLGSAMELCGNDSVYAYASSVFRKAGVPEAKIQYAIIGTGSCELLTAVVSCVVIERVGRRVLLIGGYSLMTCWGSIFTVALCLQSSFPWTLYLAMACIFAFILSFGIGPAGVTGILATELFDQMARPAACMVCGALMWIMLILVGLGFPFIMEALSHFLYVPFLGVCVCGAIYTGLFLPETKGKTFQEISKELHRLNFPRRAQGPTWRSLEVIQSTEL.

At 1–11 the chain is on the cytoplasmic side; that stretch reads MRALRRLIQGR. Residues 12-32 form a helical membrane-spanning segment; that stretch reads ILLLTICAAGIGGTFQFGYNL. At 33 to 61 the chain is on the extracellular side; that stretch reads SIINAPTLHIQEFTNETWQARTGEPLPDH. An N-linked (GlcNAc...) asparagine glycan is attached at Asn-47. The chain crosses the membrane as a helical span at residues 62 to 82; the sequence is LVLLMWSLIVSLYPLGGLFGA. Topologically, residues 83 to 97 are cytoplasmic; the sequence is LLAGPLAITLGRKKS. A helical transmembrane segment spans residues 98–118; the sequence is LLVNNIFVVSAAILFGFSRKA. Topologically, residues 119–128 are extracellular; the sequence is GSFEMIMLGR. The helical transmembrane segment at 129–149 threads the bilayer; the sequence is LLVGVNAGVSMNIQPMYLGES. Residues 150–157 lie on the Cytoplasmic side of the membrane; sequence APKELRGA. The chain crosses the membrane as a helical span at residues 158-178; the sequence is VAMSSAIFTALGIVMGQVVGL. At 179 to 187 the chain is on the extracellular side; sequence RELLGGPQA. The helical transmembrane segment at 188 to 208 threads the bilayer; sequence WPLLLASCLVPGALQLASLPL. Residues 209–273 lie on the Cytoplasmic side of the membrane; that stretch reads LPESPRYLLI…LFQHRALRRQ (65 aa). Residues 274-294 form a helical membrane-spanning segment; sequence VTSLVVLGSAMELCGNDSVYA. Residues 295-311 are Extracellular-facing; sequence YASSVFRKAGVPEAKIQ. Residues 312-332 traverse the membrane as a helical segment; sequence YAIIGTGSCELLTAVVSCVVI. The Cytoplasmic segment spans residues 333 to 338; that stretch reads ERVGRR. The chain crosses the membrane as a helical span at residues 339-359; sequence VLLIGGYSLMTCWGSIFTVAL. At 360 to 364 the chain is on the extracellular side; sequence CLQSS. The helical transmembrane segment at 365–385 threads the bilayer; it reads FPWTLYLAMACIFAFILSFGI. At 386–408 the chain is on the cytoplasmic side; the sequence is GPAGVTGILATELFDQMARPAAC. The helical transmembrane segment at 409 to 429 threads the bilayer; that stretch reads MVCGALMWIMLILVGLGFPFI. Topologically, residues 430-435 are extracellular; the sequence is MEALSH. The helical transmembrane segment at 436–456 threads the bilayer; sequence FLYVPFLGVCVCGAIYTGLFL. At 457-496 the chain is on the cytoplasmic side; the sequence is PETKGKTFQEISKELHRLNFPRRAQGPTWRSLEVIQSTEL.

This sequence belongs to the major facilitator superfamily. Sugar transporter (TC 2.A.1.1) family. Glucose transporter subfamily. Expressed in heart and skeletal muscle.

The protein localises to the cell membrane. It carries out the reaction D-glucose(out) = D-glucose(in). Facilitative glucose transporter. This is Solute carrier family 2, facilitated glucose transporter member 11 from Homo sapiens (Human).